A 242-amino-acid polypeptide reads, in one-letter code: tRNA (guanine-N(1)-)-methyltransferase (242 aa).

Residues Gly-113 and 133–138 (IGDYVL) contribute to the S-adenosyl-L-methionine site.

Belongs to the RNA methyltransferase TrmD family. Homodimer.

The protein resides in the cytoplasm. The catalysed reaction is guanosine(37) in tRNA + S-adenosyl-L-methionine = N(1)-methylguanosine(37) in tRNA + S-adenosyl-L-homocysteine + H(+). Its function is as follows. Specifically methylates guanosine-37 in various tRNAs. The sequence is that of tRNA (guanine-N(1)-)-methyltransferase from Shewanella sediminis (strain HAW-EB3).